The sequence spans 431 residues: MEDIIRIIQDGSLDGEKYFQSLKERQGKENAEIIKTVKFIIDNVKENGDKALIEYTSKFDKVELQSIEVTKEEIKAAYSKVENDFICALKTAKENIEEYHSKQVQNSYVITKENGIVMGRTVRGLDKVGIYVPGGTAAYPSSVIMNAVPAKVAGVNKIIMTTPPMKDGFVNPSILVAADLAGVDKIYKVGGAQAIAALAFGTETIDKVDKIVGPGNIFVAMAKKSVYGFVDIDMIAGPSEILVISDETGNPKFIAADLMSQAEHDTLASSILVTTSKELIGKVIEEIKLQVEGLSRKEIILEALRNFGAIILVDSISRAIEIGNVVAPEHLEIITPNPFEYLNDIKNAGSIFLGSYSPEPLGDYMAGPNHVLPTSGTARFSSPLSVDDFVKKSSYLYYSEKALRNVNDKVVKIAETEGLTAHANSIKVRFK.

Tyr-131, Gln-193, and Asn-216 together coordinate NAD(+). Residues Ser-239, Gln-261, and His-264 each coordinate substrate. 2 residues coordinate Zn(2+): Gln-261 and His-264. Catalysis depends on proton acceptor residues Glu-329 and His-330. Substrate-binding residues include His-330, Asp-363, Glu-417, and His-422. Residue Asp-363 coordinates Zn(2+). Residue His-422 participates in Zn(2+) binding.

Belongs to the histidinol dehydrogenase family. Requires Zn(2+) as cofactor.

The enzyme catalyses L-histidinol + 2 NAD(+) + H2O = L-histidine + 2 NADH + 3 H(+). Its pathway is amino-acid biosynthesis; L-histidine biosynthesis; L-histidine from 5-phospho-alpha-D-ribose 1-diphosphate: step 9/9. Catalyzes the sequential NAD-dependent oxidations of L-histidinol to L-histidinaldehyde and then to L-histidine. The protein is Histidinol dehydrogenase of Clostridium acetobutylicum (strain ATCC 824 / DSM 792 / JCM 1419 / IAM 19013 / LMG 5710 / NBRC 13948 / NRRL B-527 / VKM B-1787 / 2291 / W).